The following is a 562-amino-acid chain: Nucleoprotein (562 aa).

The binding site for the cap structure m7GTP stretch occupies residues 54-237 (LRKTKRTDGD…ITKDESAINI (184 aa)). The Mn(2+) site is built by D381 and E383. The Zn(2+) site is built by E391, C498, H501, and C523. Residue D527 coordinates Mn(2+).

Belongs to the arenaviridae nucleocapsid protein family. As to quaternary structure, homomultimerizes to form the nucleocapsid. Binds to viral genomic RNA. Interacts with glycoprotein G2. Interacts with protein Z; this interaction probably directs the encapsidated genome to budding sites. Interacts with protein L; this interaction does not interfere with Z-L interaction. Interacts with host IKBKE (via Protein kinase domain); the interaction inhibits IKBKE kinase activity.

The protein resides in the virion. It is found in the host cytoplasm. In terms of biological role, encapsidates the genome, protecting it from nucleases. The encapsidated genomic RNA is termed the nucleocapsid (NC). Serves as template for viral transcription and replication. The increased presence of protein N in host cell does not seem to trigger the switch from transcription to replication as observed in other negative strain RNA viruses. Through the interaction with host IKBKE, strongly inhibits the phosphorylation and nuclear translocation of host IRF3, a protein involved in interferon activation pathway, leading to the inhibition of interferon-beta and IRF3-dependent promoters activation. Also encodes a functional 3'-5' exoribonuclease that degrades preferentially dsRNA substrates and thereby participates in the suppression of interferon induction. This is Nucleoprotein from Homo sapiens (Human).